A 403-amino-acid chain; its full sequence is Serine/threonine transporter SstT (403 aa).

A run of 10 helical transmembrane segments spans residues 15–35 (LGLIPQIVIGIALGVGVAIVW), 49–69 (FISALKAVAPILVFLLVMTAI), 85–105 (LLYVVGTLCAALVAVLASFIF), 142–162 (ALLNANFVGILAWAMGLGMML), 183–203 (IVQLVIRCAPLGIFGLVAGTL), 218–238 (LAVIVGCMLFVALVTNPLIVF), 246–268 (YPLVFACLRGSAITAFFTRSSAA), 289–309 (ISIPLGATINMAGAAVTISVI), 317–337 (LGIGVDFATALLLCVVASLAA), and 362–382 (PDVAMQVVAIGFVISVVQDAT).

This sequence belongs to the dicarboxylate/amino acid:cation symporter (DAACS) (TC 2.A.23) family.

It is found in the cell inner membrane. It catalyses the reaction L-serine(in) + Na(+)(in) = L-serine(out) + Na(+)(out). It carries out the reaction L-threonine(in) + Na(+)(in) = L-threonine(out) + Na(+)(out). In terms of biological role, involved in the import of serine and threonine into the cell, with the concomitant import of sodium (symport system). This is Serine/threonine transporter SstT from Chromohalobacter salexigens (strain ATCC BAA-138 / DSM 3043 / CIP 106854 / NCIMB 13768 / 1H11).